The following is an 833-amino-acid chain: Leucine--tRNA ligase (833 aa).

A 'HIGH' region motif is present at residues 41-52 (PYPSGAGLHVGH). The 'KMSKS' region motif lies at 610–614 (KMSKS). Lys-613 is an ATP binding site.

It belongs to the class-I aminoacyl-tRNA synthetase family.

It localises to the cytoplasm. The enzyme catalyses tRNA(Leu) + L-leucine + ATP = L-leucyl-tRNA(Leu) + AMP + diphosphate. The polypeptide is Leucine--tRNA ligase (Streptococcus pneumoniae (strain ATCC 700669 / Spain 23F-1)).